Reading from the N-terminus, the 486-residue chain is Aspartyl/glutamyl-tRNA(Asn/Gln) amidotransferase subunit B (486 aa).

It belongs to the GatB/GatE family. GatB subfamily. As to quaternary structure, heterotrimer of A, B and C subunits.

It carries out the reaction L-glutamyl-tRNA(Gln) + L-glutamine + ATP + H2O = L-glutaminyl-tRNA(Gln) + L-glutamate + ADP + phosphate + H(+). The catalysed reaction is L-aspartyl-tRNA(Asn) + L-glutamine + ATP + H2O = L-asparaginyl-tRNA(Asn) + L-glutamate + ADP + phosphate + 2 H(+). Its function is as follows. Allows the formation of correctly charged Asn-tRNA(Asn) or Gln-tRNA(Gln) through the transamidation of misacylated Asp-tRNA(Asn) or Glu-tRNA(Gln) in organisms which lack either or both of asparaginyl-tRNA or glutaminyl-tRNA synthetases. The reaction takes place in the presence of glutamine and ATP through an activated phospho-Asp-tRNA(Asn) or phospho-Glu-tRNA(Gln). The chain is Aspartyl/glutamyl-tRNA(Asn/Gln) amidotransferase subunit B from Herminiimonas arsenicoxydans.